The chain runs to 369 residues: 1-aminocyclopropane-1-carboxylate oxidase homolog 3 (369 aa).

The Fe2OG dioxygenase domain maps to 217–318 (KGLLMLSHYY…VSVACFFTTG (102 aa)). Positions 241, 243, and 297 each coordinate Fe cation.

Belongs to the iron/ascorbate-dependent oxidoreductase family. The cofactor is Fe cation.

This Arabidopsis thaliana (Mouse-ear cress) protein is 1-aminocyclopropane-1-carboxylate oxidase homolog 3.